Here is a 396-residue protein sequence, read N- to C-terminus: Elongation factor Tu (396 aa).

The tr-type G domain maps to 10-205; that stretch reads KSHANIGTIG…AVDEYIPTPE (196 aa). Residues 19–26 form a G1 region; sequence GHVDHGKT. 19–26 lines the GTP pocket; that stretch reads GHVDHGKT. Thr-26 is a binding site for Mg(2+). A G2 region spans residues 61 to 65; that stretch reads GITIS. A G3 region spans residues 82 to 85; that stretch reads DCPG. Residues 82-86 and 137-140 contribute to the GTP site; these read DCPGH and NKCD. Residues 137–140 form a G4 region; the sequence is NKCD. The interval 175–177 is G5; the sequence is SAL.

The protein belongs to the TRAFAC class translation factor GTPase superfamily. Classic translation factor GTPase family. EF-Tu/EF-1A subfamily. As to quaternary structure, monomer.

Its subcellular location is the cytoplasm. It catalyses the reaction GTP + H2O = GDP + phosphate + H(+). Its function is as follows. GTP hydrolase that promotes the GTP-dependent binding of aminoacyl-tRNA to the A-site of ribosomes during protein biosynthesis. The chain is Elongation factor Tu from Bacillus licheniformis (strain ATCC 14580 / DSM 13 / JCM 2505 / CCUG 7422 / NBRC 12200 / NCIMB 9375 / NCTC 10341 / NRRL NRS-1264 / Gibson 46).